The primary structure comprises 384 residues: DNA dC-&gt;dU-editing enzyme APOBEC-3G (384 aa).

Residues 1 to 60 (MKPHFRNPVERMYQDTFSDNFYNRPILSRRNTVWLCYEVKTKGPSRPPLDAKIFRGQVYS) are essential for cytoplasmic localization. 2 CMP/dCMP-type deaminase domains span residues 29 to 138 (RRNT…LRSL) and 214 to 328 (GRHE…LRTL). Threonine 32 carries the phosphothreonine; by PKA modification. Residues histidine 65, cysteine 97, and cysteine 100 each contribute to the Zn(2+) site. The necessary for homooligomerization stretch occupies residues 209 to 336 (ELWVRGRHET…TLAKAGAEIS (128 aa)). The interaction with DNA stretch occupies residues 213–215 (RGR). Phosphothreonine; by PKA and CAMK2 is present on threonine 218. Histidine 257 provides a ligand contact to Zn(2+). Glutamate 259 (proton donor) is an active-site residue. Residues cysteine 288 and cysteine 291 each contribute to the Zn(2+) site. The interaction with DNA stretch occupies residues 313-320 (RIYDDQGR).

It belongs to the cytidine and deoxycytidylate deaminase family. Homodimer. Homooligomer. Can bind RNA to form ribonucleoprotein complexes of high-molecular-mass (HMM) or low-molecular-mass (LMM). HMM is inactive and heterogeneous in protein composition because of binding nonselectively to cellular RNAs, which in turn are associated with variety of cellular proteins. The LMM form which is enzymatically active has few or no RNAs associated. Its ability to form homooligomer is distinct from its ability to assemble into HMM. Interacts with APOBEC3B, APOBEC3F, MOV10, AGO2, EIF4E, EIF4ENIF1, DCP2 and DDX6 in an RNA-dependent manner. Interacts with AGO1, AGO3 and PKA/PRKACA. Zn(2+) is required as a cofactor.

It is found in the cytoplasm. It localises to the nucleus. The protein localises to the P-body. It catalyses the reaction a 2'-deoxycytidine in single-stranded DNA + H2O + H(+) = a 2'-deoxyuridine in single-stranded DNA + NH4(+). DNA deaminase (cytidine deaminase) which acts as an inhibitor of retrovirus replication and retrotransposon mobility via deaminase-dependent and -independent mechanisms. After the penetration of retroviral nucleocapsids into target cells of infection and the initiation of reverse transcription, it can induce the conversion of cytosine to uracil in the minus-sense single-strand viral DNA, leading to G-to-A hypermutations in the subsequent plus-strand viral DNA. The resultant detrimental levels of mutations in the proviral genome, along with a deamination-independent mechanism that works prior to the proviral integration, together exert efficient antiretroviral effects in infected target cells. Selectively targets single-stranded DNA and does not deaminate double-stranded DNA or single- or double-stranded RNA. May inhibit the mobility of LTR retrotransposons. The chain is DNA dC-&gt;dU-editing enzyme APOBEC-3G (APOBEC3G) from Pan paniscus (Pygmy chimpanzee).